Here is an 89-residue protein sequence, read N- to C-terminus: Small ribosomal subunit protein uS15 (89 aa).

The span at 1 to 11 shows a compositional bias: basic and acidic residues; sequence MSIAAERKAEV. Positions 1-25 are disordered; the sequence is MSIAAERKAEVIKTSANKPGDTGSP.

The protein belongs to the universal ribosomal protein uS15 family. As to quaternary structure, part of the 30S ribosomal subunit. Forms a bridge to the 50S subunit in the 70S ribosome, contacting the 23S rRNA.

Functionally, one of the primary rRNA binding proteins, it binds directly to 16S rRNA where it helps nucleate assembly of the platform of the 30S subunit by binding and bridging several RNA helices of the 16S rRNA. Its function is as follows. Forms an intersubunit bridge (bridge B4) with the 23S rRNA of the 50S subunit in the ribosome. The polypeptide is Small ribosomal subunit protein uS15 (Nitrobacter winogradskyi (strain ATCC 25391 / DSM 10237 / CIP 104748 / NCIMB 11846 / Nb-255)).